A 684-amino-acid chain; its full sequence is Pseudohemocyanin-1 (684 aa).

The first 23 residues, Ser1 to Arg23, serve as a signal peptide directing secretion. The disordered stretch occupies residues Ala7–Ala32. N-linked (GlcNAc...) asparagine glycosylation is found at Asn100, Asn193, Asn230, and Asn626.

This sequence belongs to the tyrosinase family. Hemocyanin subfamily. Hexamer. As to expression, strongly expressed in ovaries. Also expressed in heart. Not detected in hepatopancreas, gills, connective tissue or muscle.

In terms of biological role, does not function as a hemocyanin. This chain is Pseudohemocyanin-1, found in Homarus americanus (American lobster).